Consider the following 150-residue polypeptide: uncharacterized protein (150 aa).

Residues 4 to 148 enclose the Flavodoxin-like domain; it reads LILYKSIHHK…KAKEFAKSIL (145 aa).

This is an uncharacterized protein from Methanocaldococcus jannaschii (strain ATCC 43067 / DSM 2661 / JAL-1 / JCM 10045 / NBRC 100440) (Methanococcus jannaschii).